The following is a 492-amino-acid chain: Glycerol kinase 1 (492 aa).

Threonine 10 contributes to the ADP binding site. The ATP site is built by threonine 10 and serine 11. Sn-glycerol 3-phosphate is bound at residue threonine 10. Lysine 14 provides a ligand contact to ADP. Arginine 80, glutamate 81, tyrosine 132, and aspartate 241 together coordinate sn-glycerol 3-phosphate. 4 residues coordinate glycerol: arginine 80, glutamate 81, tyrosine 132, and aspartate 241. Positions 263, 306, 407, and 411 each coordinate ADP. Residues threonine 263, glycine 306, and glycine 407 each coordinate ATP.

It belongs to the FGGY kinase family.

The catalysed reaction is glycerol + ATP = sn-glycerol 3-phosphate + ADP + H(+). It participates in polyol metabolism; glycerol degradation via glycerol kinase pathway; sn-glycerol 3-phosphate from glycerol: step 1/1. With respect to regulation, inhibited by fructose 1,6-bisphosphate (FBP). In terms of biological role, key enzyme in the regulation of glycerol uptake and metabolism. Catalyzes the phosphorylation of glycerol to yield sn-glycerol 3-phosphate. This Thermotoga maritima (strain ATCC 43589 / DSM 3109 / JCM 10099 / NBRC 100826 / MSB8) protein is Glycerol kinase 1.